Consider the following 315-residue polypeptide: Glutathione synthetase (315 aa).

The region spanning 125 to 310 (KLFTAWFSEF…ITGMLFDAIE (186 aa)) is the ATP-grasp domain. 151 to 207 (HQAKGDIILKPLDGMGGTSIFRVKQDDPNLGVIIETLTQYGNQYAMAQAFIPEITKG) contacts ATP. Residues Glu-281 and Asn-283 each coordinate Mg(2+).

It belongs to the prokaryotic GSH synthase family. Requires Mg(2+) as cofactor. It depends on Mn(2+) as a cofactor.

It carries out the reaction gamma-L-glutamyl-L-cysteine + glycine + ATP = glutathione + ADP + phosphate + H(+). The protein operates within sulfur metabolism; glutathione biosynthesis; glutathione from L-cysteine and L-glutamate: step 2/2. The chain is Glutathione synthetase from Shewanella oneidensis (strain ATCC 700550 / JCM 31522 / CIP 106686 / LMG 19005 / NCIMB 14063 / MR-1).